Reading from the N-terminus, the 388-residue chain is Biotin synthase (388 aa).

The Radical SAM core domain occupies 47–277 (WFGRRVKLNY…DVEVRIAGGR (231 aa)). 3 residues coordinate [4Fe-4S] cluster: Cys65, Cys69, and Cys72. Cys109, Cys142, Cys202, and Arg272 together coordinate [2Fe-2S] cluster. Residues 335-371 (APAGGCGSEQSAGCGSHEGGGACGSAPAPRTDEARTD) are disordered.

It belongs to the radical SAM superfamily. Biotin synthase family. Homodimer. [4Fe-4S] cluster serves as cofactor. Requires [2Fe-2S] cluster as cofactor.

The catalysed reaction is (4R,5S)-dethiobiotin + (sulfur carrier)-SH + 2 reduced [2Fe-2S]-[ferredoxin] + 2 S-adenosyl-L-methionine = (sulfur carrier)-H + biotin + 2 5'-deoxyadenosine + 2 L-methionine + 2 oxidized [2Fe-2S]-[ferredoxin]. It participates in cofactor biosynthesis; biotin biosynthesis; biotin from 7,8-diaminononanoate: step 2/2. Catalyzes the conversion of dethiobiotin (DTB) to biotin by the insertion of a sulfur atom into dethiobiotin via a radical-based mechanism. In Streptomyces avermitilis (strain ATCC 31267 / DSM 46492 / JCM 5070 / NBRC 14893 / NCIMB 12804 / NRRL 8165 / MA-4680), this protein is Biotin synthase.